A 473-amino-acid chain; its full sequence is Glutamine synthetase (473 aa).

In terms of domain architecture, GS beta-grasp spans 18-102 (NNIKWVDLQF…VLTKVFWGGG (85 aa)). The region spanning 110–473 (PRGIAEEAEK…PMEIYQYLDS (364 aa)) is the GS catalytic domain. Positions 133 and 135 each coordinate Mg(2+). Glutamate 207 is an ATP binding site. Mg(2+) is bound by residues glutamate 212 and glutamate 220. Residues 264 to 265 (NG) and glycine 265 each bind L-glutamate. Histidine 269 contributes to the Mg(2+) binding site. Residues 271–273 (HFS) and serine 273 each bind ATP. Residues arginine 324, glutamate 330, and arginine 342 each contribute to the L-glutamate site. ATP is bound by residues arginine 342, arginine 347, and lysine 357. Position 362 (glutamate 362) interacts with Mg(2+). Arginine 364 lines the L-glutamate pocket.

The protein belongs to the glutamine synthetase family. In terms of assembly, oligomer of 12 subunits arranged in the form of two hexagons. The cofactor is Mg(2+). Mn(2+) is required as a cofactor.

Its subcellular location is the cytoplasm. It carries out the reaction L-glutamate + NH4(+) + ATP = L-glutamine + ADP + phosphate + H(+). Strongly inhibited by glycine and L-alanine. AMP at 10 mM displays a very weak inhibitory effect. The activity of this enzyme is not controlled by adenylation. Its function is as follows. Probably involved in nitrogen metabolism via ammonium assimilation. Catalyzes the ATP-dependent biosynthesis of glutamine from glutamate and ammonia. This is Glutamine synthetase from Sulfolobus acidocaldarius (strain ATCC 33909 / DSM 639 / JCM 8929 / NBRC 15157 / NCIMB 11770).